The sequence spans 175 residues: NADH-ubiquinone oxidoreductase chain 6 (175 aa).

6 helical membrane passes run 1–21 (MMYI…GFSS), 24–44 (SPVY…GIIM), 51–71 (LGLV…GYTI), 87–107 (VVLS…VWLF), 113–133 (LVGF…GSFG), and 148–168 (YGFW…FIAI).

The protein belongs to the complex I subunit 6 family. As to quaternary structure, core subunit of respiratory chain NADH dehydrogenase (Complex I) which is composed of 45 different subunits.

It localises to the mitochondrion inner membrane. It catalyses the reaction a ubiquinone + NADH + 5 H(+)(in) = a ubiquinol + NAD(+) + 4 H(+)(out). In terms of biological role, core subunit of the mitochondrial membrane respiratory chain NADH dehydrogenase (Complex I) which catalyzes electron transfer from NADH through the respiratory chain, using ubiquinone as an electron acceptor. Essential for the catalytic activity and assembly of complex I. The protein is NADH-ubiquinone oxidoreductase chain 6 (MT-ND6) of Mammuthus primigenius (Siberian woolly mammoth).